We begin with the raw amino-acid sequence, 213 residues long: Nicotinamidase (213 aa).

Asp-10 acts as the Proton acceptor in catalysis. Positions 52, 54, and 86 each coordinate Zn(2+). Lys-111 is an active-site residue. The active-site Nucleophile is Cys-156.

It belongs to the isochorismatase family.

It carries out the reaction nicotinamide + H2O = nicotinate + NH4(+). It catalyses the reaction pyrazinamide + H2O = pyrazine-2-carboxylate + NH4(+). The protein operates within cofactor biosynthesis; nicotinate biosynthesis; nicotinate from nicotinamide: step 1/1. Functionally, catalyzes the deamidation of nicotinamide (NAM) into nicotinate. Likely functions in the cyclical salvage pathway for production of NAD from nicotinamide. Its function is as follows. Is also able to hydrolyze the first-line antituberculous drug pyrazinamide (PZA) into pyrazinoic acid in vitro, but this reaction is not considered to be physiologically relevant. The protein is Nicotinamidase of Escherichia coli (strain K12).